We begin with the raw amino-acid sequence, 197 residues long: Large ribosomal subunit protein bL9c (197 aa).

A chloroplast-targeting transit peptide spans 1–42 (MASSTALSLSWSSSPCWSHSFNGGANETLKVSERRFNFEVVS).

This sequence belongs to the bacterial ribosomal protein bL9 family. Part of the 50S ribosomal subunit.

It localises to the plastid. It is found in the chloroplast. In terms of biological role, binds to the 23S rRNA. This Arabidopsis thaliana (Mouse-ear cress) protein is Large ribosomal subunit protein bL9c (RPL9).